Here is a 359-residue protein sequence, read N- to C-terminus: Nicotinate-nucleotide--dimethylbenzimidazole phosphoribosyltransferase (359 aa).

E318 functions as the Proton acceptor in the catalytic mechanism.

The protein belongs to the CobT family. As to quaternary structure, homodimer.

The enzyme catalyses 5,6-dimethylbenzimidazole + nicotinate beta-D-ribonucleotide = alpha-ribazole 5'-phosphate + nicotinate + H(+). Its pathway is nucleoside biosynthesis; alpha-ribazole biosynthesis; alpha-ribazole from 5,6-dimethylbenzimidazole: step 1/2. Its function is as follows. Catalyzes the synthesis of alpha-ribazole-5'-phosphate from nicotinate mononucleotide (NAMN) and 5,6-dimethylbenzimidazole (DMB). The polypeptide is Nicotinate-nucleotide--dimethylbenzimidazole phosphoribosyltransferase (Escherichia coli O157:H7).